The following is a 314-amino-acid chain: 4-hydroxyproline 2-epimerase (314 aa).

Cysteine 88 serves as the catalytic Proton acceptor. Substrate is bound by residues 89 to 90, histidine 208, and aspartate 232; that span reads GH. Cysteine 236 acts as the Proton donor in catalysis. Position 237–238 (237–238) interacts with substrate; the sequence is GT.

This sequence belongs to the proline racemase family. Homodimer.

The catalysed reaction is trans-4-hydroxy-L-proline = cis-4-hydroxy-D-proline. With respect to regulation, inhibited by iodoacetate, iodoacetamide and by high amounts (10 mM) of pyrrole-2-carboxylate (PYC). Not inhibited by PYC at 1 mM. Functionally, allows intracellular utilization of 4-hydroxyproline, one of the major constituents of host collagen, by converting trans-4-hydroxy-L-proline (t4LHyp) to cis-4-hydroxy-D-proline (c4DHyp), which can be further metabolized by intracellular 4-hydroxy-D-proline oxidases. Strong B-cell mitogen. Plays an important role in the regulation of intra- and extracellular amino acid pools, allowing the bacterium to profit from host precursors and enzymatic pathways. Cannot use L-proline, trans-3-hydroxy-L-proline (t3LHyp) and pyrrolidone-5-carboxylate (P5C) as substrate. In Pseudomonas aeruginosa (strain ATCC 15692 / DSM 22644 / CIP 104116 / JCM 14847 / LMG 12228 / 1C / PRS 101 / PAO1), this protein is 4-hydroxyproline 2-epimerase.